Here is a 685-residue protein sequence, read N- to C-terminus: MAEDKSKRDSIEMSMKGCQTNNGFVHNEDILEQTPDPGSSTDNLKHSTRGILGSQEPDFKGVQPYAGMPKEVLFQFSGQARYRIPREILFWLTVASVLVLIAATIAIIALSPKCLDWWQEGPMYQIYPRSFKDSNKDGNGDLKGIQDKLDYITALNIKTVWITSFYKSSLKDFRYGVEDFREVDPIFGTMEDFENLVAAIHDKGLKLIIDFIPNHTSDKHIWFQLSRTRTGKYTDYYIWHDCTHENGKTIPPNNWLSVYGNSSWHFDEVRNQCYFHQFMKEQPDLNFRNPDVQEEIKEILRFWLTKGVDGFSLDAVKFLLEAKHLRDEIQVNKTQIPDTVTQYSELYHDFTTTQVGMHDIVRSFRQTMDQYSTEPGRYRFMGTEAYAESIDRTVMYYGLPFIQEADFPFNNYLSMLDTVSGNSVYEVITSWMENMPEGKWPNWMIGGPDSSRLTSRLGNQYVNVMNMLLFTLPGTPITYYGEEIGMGNIVAANLNESYDINTLRSKSPMQWDNSSNAGFSEASNTWLPTNSDYHTVNVDVQKTQPRSALKLYQDLSLLHANELLLNRGWFCHLRNDSHYVVYTRELDGIDRIFIVVLNFGESTLLNLHNMISGLPAKMRIRLSTNSADKGSKVDTSGIFLDKGEGLIFEHNTKNLLHRQTAFRDRCFVSNRACYSSVLNILYTSC.

Residues 1-11 are compositionally biased toward basic and acidic residues; that stretch reads MAEDKSKRDSI. The tract at residues 1–56 is disordered; that stretch reads MAEDKSKRDSIEMSMKGCQTNNGFVHNEDILEQTPDPGSSTDNLKHSTRGILGSQE. The Cytoplasmic segment spans residues 1 to 87; that stretch reads MAEDKSKRDS…GQARYRIPRE (87 aa). S10 carries the post-translational modification Phosphoserine. The chain crosses the membrane as a helical; Signal-anchor for type II membrane protein span at residues 88–108; that stretch reads ILFWLTVASVLVLIAATIAII. Residues 109-685 are Extracellular-facing; sequence ALSPKCLDWW…SVLNILYTSC (577 aa). N214 contacts Ca(2+). N-linked (GlcNAc...) asparagine glycans are attached at residues N214 and N261. A disulfide bond links C242 and C273. 4 residues coordinate Ca(2+): D284, F318, L319, and E321. 4 N-linked (GlcNAc...) asparagine glycosylation sites follow: N332, N495, N513, and N575. Intrachain disulfides connect C571–C666 and C673–C685.

Disulfide-linked heterodimer composed of the catalytic light subunit SLC7A9 and the heavy subunit SLC3A1. The heterodimer is the minimal functional unit. Assembles in non-covalently linked heterotetramers (dimers of heterodimers) and higher order oligomers; the oligomerization is mediated by SLC3A1 likely to prevent degradation in the endoplasmic reticulum and facilitate heteromer trafficking to the plasma membrane. Disulfide-linked heterodimer composed of the catalytic light subunit SLC7A13 and the heavy subunit SLC3A1. Expressed in the brush border membrane in the kidney (at protein level). Predominantly expressed in the kidney, small intestine and pancreas. Weakly expressed in liver.

It localises to the cell membrane. The protein localises to the apical cell membrane. Acts as a chaperone that facilitates biogenesis and trafficking of functional transporter heteromers to the plasma membrane. Associates with SLC7A9 to form a functional transporter complex that mediates the electrogenic exchange between cationic amino acids and neutral amino acids, with a stoichiometry of 1:1. SLC7A9-SLC3A1 transporter has system b(0,+)-like activity with high affinity for extracellular cationic amino acids and L-cystine and lower affinity for intracellular neutral amino acids. Substrate exchange is driven by high concentration of intracellular neutral amino acids and the intracellular reduction of L-cystine to L-cysteine. SLC7A9-SLC3A1 acts as a major transporter for reabsorption of L-cystine and dibasic amino acids across the brush border membrane in early proximal tubules. Associates with SLC7A13 to form a functional complex that transports anionic and neutral amino acids via exchange or facilitated diffusion. SLC7A13-SLC3A1 may act as a major transporter for L-cystine in late proximal tubules, ensuring its reabsorption from the luminal fluid in exchange for cytosolic L-glutamate or L-aspartate. In Homo sapiens (Human), this protein is Amino acid transporter heavy chain SLC3A1.